The primary structure comprises 260 residues: 5'-nucleotidase SurE (260 aa).

Residues Asp-8, Asp-9, Ser-39, and Asn-91 each contribute to the a divalent metal cation site.

The protein belongs to the SurE nucleotidase family. It depends on a divalent metal cation as a cofactor.

It localises to the cytoplasm. It carries out the reaction a ribonucleoside 5'-phosphate + H2O = a ribonucleoside + phosphate. Nucleotidase that shows phosphatase activity on nucleoside 5'-monophosphates. The sequence is that of 5'-nucleotidase SurE from Acidovorax ebreus (strain TPSY) (Diaphorobacter sp. (strain TPSY)).